Consider the following 254-residue polypeptide: 3-deoxy-manno-octulosonate cytidylyltransferase (254 aa).

The protein belongs to the KdsB family.

It is found in the cytoplasm. It carries out the reaction 3-deoxy-alpha-D-manno-oct-2-ulosonate + CTP = CMP-3-deoxy-beta-D-manno-octulosonate + diphosphate. It functions in the pathway nucleotide-sugar biosynthesis; CMP-3-deoxy-D-manno-octulosonate biosynthesis; CMP-3-deoxy-D-manno-octulosonate from 3-deoxy-D-manno-octulosonate and CTP: step 1/1. The protein operates within bacterial outer membrane biogenesis; lipopolysaccharide biosynthesis. Functionally, activates KDO (a required 8-carbon sugar) for incorporation into bacterial lipopolysaccharide in Gram-negative bacteria. This is 3-deoxy-manno-octulosonate cytidylyltransferase from Haemophilus influenzae (strain 86-028NP).